A 227-amino-acid polypeptide reads, in one-letter code: PKHD-type hydroxylase Bxeno_B2756 (227 aa).

The Fe2OG dioxygenase domain maps to 80–179 (QVYPPLFNRY…RVASFFWVQS (100 aa)). Residues histidine 98, aspartate 100, and histidine 160 each coordinate Fe cation. 2-oxoglutarate is bound at residue arginine 170.

Fe(2+) is required as a cofactor. L-ascorbate serves as cofactor.

The chain is PKHD-type hydroxylase Bxeno_B2756 from Paraburkholderia xenovorans (strain LB400).